We begin with the raw amino-acid sequence, 938 residues long: LPS-assembly protein LptD (938 aa).

An N-terminal signal peptide occupies residues 1–33 (MAVKHPAFRKKFPLLVTGSLLALQPAFSLQSFA). The interval 52–96 (KTATSALPPRPQHSRSAVSTTSGSATATATKQEPAPVLVTESKGR) is disordered. The span at 65–81 (SRSAVSTTSGSATATAT) shows a compositional bias: low complexity.

It belongs to the LptD family. In terms of assembly, component of the lipopolysaccharide transport and assembly complex. Interacts with LptE and LptA.

It is found in the cell outer membrane. Its function is as follows. Together with LptE, is involved in the assembly of lipopolysaccharide (LPS) at the surface of the outer membrane. This is LPS-assembly protein LptD from Ectopseudomonas mendocina (strain ymp) (Pseudomonas mendocina).